The chain runs to 431 residues: Enolase (431 aa).

Glutamine 167 is a binding site for (2R)-2-phosphoglycerate. The active-site Proton donor is glutamate 209. 3 residues coordinate Mg(2+): aspartate 246, glutamate 290, and aspartate 317. Positions 342, 371, 372, and 393 each coordinate (2R)-2-phosphoglycerate. Lysine 342 functions as the Proton acceptor in the catalytic mechanism.

This sequence belongs to the enolase family. As to quaternary structure, component of the RNA degradosome, a multiprotein complex involved in RNA processing and mRNA degradation. It depends on Mg(2+) as a cofactor.

Its subcellular location is the cytoplasm. It is found in the secreted. The protein localises to the cell surface. The catalysed reaction is (2R)-2-phosphoglycerate = phosphoenolpyruvate + H2O. Its pathway is carbohydrate degradation; glycolysis; pyruvate from D-glyceraldehyde 3-phosphate: step 4/5. In terms of biological role, catalyzes the reversible conversion of 2-phosphoglycerate (2-PG) into phosphoenolpyruvate (PEP). It is essential for the degradation of carbohydrates via glycolysis. This Enterobacter sp. (strain 638) protein is Enolase.